A 327-amino-acid chain; its full sequence is MIDAFARDIHYLRVSVTDRCNLRCIYCMPEAGLPLVDHREVLRFEEFERLIAIAASQGIRRVRITGGEPLVRKGIVPFVARVKTMTGIEDVALTTNGLLLPRFASELKAAGLDRVNISLDTLRPERFRAVTRVGRIDDVWTGIEAALAADLHPVKLNVVVMGGVNDDEVADFARLTLQWPIHVRFIELMPIGEGDSRFRGQYVTIEQMKAKMAEQGLRLGDHPGIRGGGPARYHTLAGALGTVGFISAISKHFCGTCNRLRLTAEGKLRPCLHSRQEIDLRTPLRRGASDNLLARIFQKAVEAKPYQHHMLDEGWGDRPRLMSQIGG.

In terms of domain architecture, Radical SAM core spans 4–226; the sequence is AFARDIHYLR…LRLGDHPGIR (223 aa). Position 13 (R13) interacts with GTP. Positions 20 and 24 each coordinate [4Fe-4S] cluster. Y26 provides a ligand contact to S-adenosyl-L-methionine. C27 provides a ligand contact to [4Fe-4S] cluster. R63 contacts GTP. G67 is an S-adenosyl-L-methionine binding site. Residue T94 coordinates GTP. S118 is an S-adenosyl-L-methionine binding site. K155 is a GTP binding site. M189 provides a ligand contact to S-adenosyl-L-methionine. Residues C254 and C257 each contribute to the [4Fe-4S] cluster site. 259–261 contributes to the GTP binding site; the sequence is RLR. C271 is a binding site for [4Fe-4S] cluster.

Belongs to the radical SAM superfamily. MoaA family. As to quaternary structure, monomer and homodimer. Requires [4Fe-4S] cluster as cofactor.

The catalysed reaction is GTP + AH2 + S-adenosyl-L-methionine = (8S)-3',8-cyclo-7,8-dihydroguanosine 5'-triphosphate + 5'-deoxyadenosine + L-methionine + A + H(+). The protein operates within cofactor biosynthesis; molybdopterin biosynthesis. Catalyzes the cyclization of GTP to (8S)-3',8-cyclo-7,8-dihydroguanosine 5'-triphosphate. The polypeptide is GTP 3',8-cyclase (Heliobacterium modesticaldum (strain ATCC 51547 / Ice1)).